The sequence spans 418 residues: Serine hydroxymethyltransferase (418 aa).

Residues Leu-121 and 125 to 127 each bind (6S)-5,6,7,8-tetrahydrofolate; that span reads GHL. Lys-230 is subject to N6-(pyridoxal phosphate)lysine. 355–357 provides a ligand contact to (6S)-5,6,7,8-tetrahydrofolate; it reads SPF.

This sequence belongs to the SHMT family. Homodimer. Pyridoxal 5'-phosphate is required as a cofactor.

It is found in the cytoplasm. It catalyses the reaction (6R)-5,10-methylene-5,6,7,8-tetrahydrofolate + glycine + H2O = (6S)-5,6,7,8-tetrahydrofolate + L-serine. It participates in one-carbon metabolism; tetrahydrofolate interconversion. It functions in the pathway amino-acid biosynthesis; glycine biosynthesis; glycine from L-serine: step 1/1. Catalyzes the reversible interconversion of serine and glycine with tetrahydrofolate (THF) serving as the one-carbon carrier. This reaction serves as the major source of one-carbon groups required for the biosynthesis of purines, thymidylate, methionine, and other important biomolecules. Also exhibits THF-independent aldolase activity toward beta-hydroxyamino acids, producing glycine and aldehydes, via a retro-aldol mechanism. This is Serine hydroxymethyltransferase from Streptococcus pyogenes serotype M3 (strain ATCC BAA-595 / MGAS315).